The primary structure comprises 522 residues: Cytochrome P450 1A3 (522 aa).

Residue Phe-229 coordinates substrate. Cys-463 lines the heme pocket.

It belongs to the cytochrome P450 family. Heme is required as a cofactor. In terms of tissue distribution, liver.

Its subcellular location is the endoplasmic reticulum membrane. It is found in the microsome membrane. The enzyme catalyses an organic molecule + reduced [NADPH--hemoprotein reductase] + O2 = an alcohol + oxidized [NADPH--hemoprotein reductase] + H2O + H(+). In terms of biological role, cytochromes P450 are a group of heme-thiolate monooxygenases. They oxidize a variety of structurally unrelated compounds, including steroids, fatty acids, and xenobiotics. The chain is Cytochrome P450 1A3 (cyp1a3) from Oncorhynchus mykiss (Rainbow trout).